Consider the following 445-residue polypeptide: Aminopeptidase S (445 aa).

The first 45 residues, 1 to 45 (MRPNRFSLRRSPTAVAAVALAAVLAAGAPAAQAAGAAAPTAAAAA), serve as a signal peptide directing secretion. Positions 48 and 49 each coordinate Ca(2+). Residues His130 and Asp142 each contribute to the Zn(2+) site. The active-site Proton acceptor is Glu176. The Zn(2+) site is built by Glu177, Asp205, and His292. A disulfide bridge connects residues Cys290 and Cys295. Residues Asp307 and Asp311 each coordinate Ca(2+). Residues 325 to 445 (GEPPTGEGVF…GYIDSWKLTF (121 aa)) form the P/Homo B domain. Residues 330–445 (GEGVFSNTTD…GYIDSWKLTF (116 aa)) constitute a propeptide, removed in mature form.

Belongs to the peptidase M28 family. M28A subfamily. In terms of assembly, monomer. Ca(2+) is required as a cofactor. It depends on Zn(2+) as a cofactor. The cofactor is Mn(2+). Requires Co(2+) as cofactor.

The protein resides in the secreted. The catalysed reaction is Release of an N-terminal amino acid with a preference for large hydrophobic amino-terminus residues.. Its activity is regulated as follows. Calcium activates the enzyme, inhibited by 1,10-phenanthroline, EDTA and EGTA. End-product inhibited by L-amino acids. Non-competitively inhibited by NaF and NaH(2)PO(4). Functionally, an exopeptidase specific for larger hydrophobic amino acids (especially leucine), no cleavage occurs if the next residue is proline. The polypeptide is Aminopeptidase S (Streptomyces griseus subsp. griseus (strain JCM 4626 / CBS 651.72 / NBRC 13350 / KCC S-0626 / ISP 5235)).